Here is a 97-residue protein sequence, read N- to C-terminus: Nucleoid-associated protein HPAG1_0033 (97 aa).

The protein belongs to the YbaB/EbfC family. As to quaternary structure, homodimer.

The protein resides in the cytoplasm. It is found in the nucleoid. Binds to DNA and alters its conformation. May be involved in regulation of gene expression, nucleoid organization and DNA protection. This Helicobacter pylori (strain HPAG1) protein is Nucleoid-associated protein HPAG1_0033.